Consider the following 396-residue polypeptide: Elongation factor Tu (396 aa).

The tr-type G domain occupies K10–I206. The G1 stretch occupies residues G19–T26. Residue G19 to T26 participates in GTP binding. T26 contacts Mg(2+). Positions G62–N66 are G2. The segment at D83–G86 is G3. GTP contacts are provided by residues D83–H87 and N138–D141. Residues N138–D141 form a G4 region. The segment at S176–L178 is G5.

The protein belongs to the TRAFAC class translation factor GTPase superfamily. Classic translation factor GTPase family. EF-Tu/EF-1A subfamily. Monomer.

The protein localises to the cytoplasm. It catalyses the reaction GTP + H2O = GDP + phosphate + H(+). Its function is as follows. GTP hydrolase that promotes the GTP-dependent binding of aminoacyl-tRNA to the A-site of ribosomes during protein biosynthesis. The protein is Elongation factor Tu of Renibacterium salmoninarum (strain ATCC 33209 / DSM 20767 / JCM 11484 / NBRC 15589 / NCIMB 2235).